Here is a 186-residue protein sequence, read N- to C-terminus: Elongation factor P (186 aa).

It belongs to the elongation factor P family.

It is found in the cytoplasm. It participates in protein biosynthesis; polypeptide chain elongation. In terms of biological role, involved in peptide bond synthesis. Stimulates efficient translation and peptide-bond synthesis on native or reconstituted 70S ribosomes in vitro. Probably functions indirectly by altering the affinity of the ribosome for aminoacyl-tRNA, thus increasing their reactivity as acceptors for peptidyl transferase. This Shewanella woodyi (strain ATCC 51908 / MS32) protein is Elongation factor P.